Reading from the N-terminus, the 681-residue chain is Elongation factor G (681 aa).

In terms of domain architecture, tr-type G spans 5-279; it reads KNIRNIGIIA…SIVNFLPSPI (275 aa). GTP is bound by residues 14–21, 82–86, and 136–139; these read AHVDAGKT, DTPGH, and NKLD.

It belongs to the TRAFAC class translation factor GTPase superfamily. Classic translation factor GTPase family. EF-G/EF-2 subfamily.

Its subcellular location is the cytoplasm. Catalyzes the GTP-dependent ribosomal translocation step during translation elongation. During this step, the ribosome changes from the pre-translocational (PRE) to the post-translocational (POST) state as the newly formed A-site-bound peptidyl-tRNA and P-site-bound deacylated tRNA move to the P and E sites, respectively. Catalyzes the coordinated movement of the two tRNA molecules, the mRNA and conformational changes in the ribosome. This is Elongation factor G from Carsonella ruddii (strain PV).